A 418-amino-acid polypeptide reads, in one-letter code: AP-3 complex subunit mu-1 (418 aa).

The MHD domain maps to asparagine 176–arginine 417.

The protein belongs to the adaptor complexes medium subunit family. In terms of assembly, adaptor protein complex 3 (AP-3) is a heterotetramer composed of two large adaptins (delta-type subunit AP3D1 and beta-type subunit AP3B1 or AP3B2), a medium adaptin (mu-type subunit AP3M1 or AP3M2) and a small adaptin (sigma-type subunit APS1 or AP3S2). Interacts with AGAP1. AP-3 associates with the BLOC-1 complex.

The protein localises to the golgi apparatus. Its subcellular location is the cytoplasmic vesicle membrane. Its function is as follows. Part of the AP-3 complex, an adaptor-related complex which is not clathrin-associated. The complex is associated with the Golgi region as well as more peripheral structures. It facilitates the budding of vesicles from the Golgi membrane and may be directly involved in trafficking to lysosomes. In concert with the BLOC-1 complex, AP-3 is required to target cargos into vesicles assembled at cell bodies for delivery into neurites and nerve terminals. The chain is AP-3 complex subunit mu-1 (Ap3m1) from Mus musculus (Mouse).